The following is a 426-amino-acid chain: Histidine--tRNA ligase (426 aa).

This sequence belongs to the class-II aminoacyl-tRNA synthetase family. In terms of assembly, homodimer.

Its subcellular location is the cytoplasm. The enzyme catalyses tRNA(His) + L-histidine + ATP = L-histidyl-tRNA(His) + AMP + diphosphate + H(+). The polypeptide is Histidine--tRNA ligase (Prochlorococcus marinus (strain MIT 9301)).